The following is a 290-amino-acid chain: MSIISTKYLLQDAQEKGYAVPAFNIHNAETIQAILEVCREMKSPVILAGTPGTFKHIALEEIYALCSAYSTSFDIPLALHLDHHESLDDIRHKVNAGVRSAMIDGSHFPFEENVKLVKSVVDFCHSRDCSVEAELGRLGGVEDDMSVDAENAFLTDPQEAKRFVELTGVDSLAVAIGTAHGLYTKKPKIDFQRLAEIREVVDIPLVLHGASDVPDEYVRRTIELGVCKVNVATELKIAFAAAVKKWFIENPDGNDPRYYMRVGMNAMKEVVRSKITVCNSYGKLLPALQY.

Asp-82 acts as the Proton donor in catalysis. Zn(2+)-binding residues include His-83 and His-180. Position 181 (Gly-181) interacts with dihydroxyacetone phosphate. Zn(2+) is bound at residue His-208. Dihydroxyacetone phosphate-binding positions include 209-211 (GAS) and 230-233 (NVAT).

The protein belongs to the class II fructose-bisphosphate aldolase family. TagBP aldolase KbaY subfamily. As to quaternary structure, homotetramer. Forms a complex with KbaZ. The cofactor is Zn(2+).

The enzyme catalyses D-tagatofuranose 1,6-bisphosphate = D-glyceraldehyde 3-phosphate + dihydroxyacetone phosphate. Its pathway is carbohydrate metabolism; D-tagatose 6-phosphate degradation; D-glyceraldehyde 3-phosphate and glycerone phosphate from D-tagatose 6-phosphate: step 2/2. Its function is as follows. Catalytic subunit of the tagatose-1,6-bisphosphate aldolase KbaYZ, which catalyzes the reversible aldol condensation of dihydroxyacetone phosphate (DHAP or glycerone-phosphate) with glyceraldehyde 3-phosphate (G3P) to produce tagatose 1,6-bisphosphate (TBP). Requires KbaZ subunit for full activity and stability. The chain is D-tagatose-1,6-bisphosphate aldolase subunit KbaY from Salmonella arizonae (strain ATCC BAA-731 / CDC346-86 / RSK2980).